The primary structure comprises 199 residues: Peptidyl-tRNA hydrolase (199 aa).

Y15 lines the tRNA pocket. The active-site Proton acceptor is H20. 3 residues coordinate tRNA: Y66, N68, and N114.

Belongs to the PTH family. As to quaternary structure, monomer.

The protein localises to the cytoplasm. It catalyses the reaction an N-acyl-L-alpha-aminoacyl-tRNA + H2O = an N-acyl-L-amino acid + a tRNA + H(+). Hydrolyzes ribosome-free peptidyl-tRNAs (with 1 or more amino acids incorporated), which drop off the ribosome during protein synthesis, or as a result of ribosome stalling. Its function is as follows. Catalyzes the release of premature peptidyl moieties from peptidyl-tRNA molecules trapped in stalled 50S ribosomal subunits, and thus maintains levels of free tRNAs and 50S ribosomes. The sequence is that of Peptidyl-tRNA hydrolase from Burkholderia multivorans (strain ATCC 17616 / 249).